A 159-amino-acid polypeptide reads, in one-letter code: Oleosin Cor a 12 (159 aa).

The segment covering methionine 1–valine 10 has biased composition (polar residues). The disordered stretch occupies residues methionine 1 to lysine 24. A run of 3 helical transmembrane segments spans residues valine 45–leucine 65, leucine 70–alanine 90, and phenylalanine 92–tyrosine 112.

It belongs to the oleosin family. Expressed in seeds.

It is found in the lipid droplet. Its subcellular location is the membrane. Its function is as follows. May have a structural role to stabilize the lipid body during desiccation of the seed by preventing coalescence of the oil. Probably interacts with both lipid and phospholipid moieties of lipid bodies. May also provide recognition signals for specific lipase anchorage in lipolysis during seedling growth. This is Oleosin Cor a 12 from Corylus avellana (European hazel).